The following is a 309-amino-acid chain: Taste receptor type 2 member 114 (309 aa).

Residues M1–G7 lie on the Extracellular side of the membrane. Residues V8–A28 traverse the membrane as a helical segment. The Cytoplasmic segment spans residues L29–N43. A helical transmembrane segment spans residues I44 to T64. The Extracellular segment spans residues E65–Y87. The helical transmembrane segment at L88–F108 threads the bilayer. Residues L109–N127 lie on the Cytoplasmic side of the membrane. The helical transmembrane segment at I128–V148 threads the bilayer. Residues V149–G182 lie on the Extracellular side of the membrane. N161 is a glycosylation site (N-linked (GlcNAc...) asparagine). A helical transmembrane segment spans residues G183–W203. The Cytoplasmic segment spans residues R204–S233. Residues F234–V254 traverse the membrane as a helical segment. The Extracellular portion of the chain corresponds to P255–L259. Residues L260–I280 traverse the membrane as a helical segment. Over L281–T309 the chain is Cytoplasmic.

This sequence belongs to the G-protein coupled receptor T2R family.

Its subcellular location is the membrane. Its function is as follows. Putative taste receptor which may play a role in the perception of bitterness. The chain is Taste receptor type 2 member 114 from Rattus norvegicus (Rat).